Here is a 405-residue protein sequence, read N- to C-terminus: Probable dual-specificity RNA methyltransferase RlmN (405 aa).

The segment covering 1-15 (MSSTGSSVSTSGLVL) has biased composition (low complexity). The interval 1 to 34 (MSSTGSSVSTSGLVLPSTPLAEPGKEVPLVVNTP) is disordered. Glu-130 functions as the Proton acceptor in the catalytic mechanism. Residues 142–386 (SAARATLCLS…VTVRDTRGSE (245 aa)) form the Radical SAM core domain. Cys-149 and Cys-391 are joined by a disulfide. 3 residues coordinate [4Fe-4S] cluster: Cys-156, Cys-160, and Cys-163. S-adenosyl-L-methionine-binding positions include 211-212 (GE), Ser-245, 268-270 (SLH), and Asn-348. The S-methylcysteine intermediate role is filled by Cys-391.

This sequence belongs to the radical SAM superfamily. RlmN family. The cofactor is [4Fe-4S] cluster.

It localises to the cytoplasm. It carries out the reaction adenosine(2503) in 23S rRNA + 2 reduced [2Fe-2S]-[ferredoxin] + 2 S-adenosyl-L-methionine = 2-methyladenosine(2503) in 23S rRNA + 5'-deoxyadenosine + L-methionine + 2 oxidized [2Fe-2S]-[ferredoxin] + S-adenosyl-L-homocysteine. The catalysed reaction is adenosine(37) in tRNA + 2 reduced [2Fe-2S]-[ferredoxin] + 2 S-adenosyl-L-methionine = 2-methyladenosine(37) in tRNA + 5'-deoxyadenosine + L-methionine + 2 oxidized [2Fe-2S]-[ferredoxin] + S-adenosyl-L-homocysteine. Functionally, specifically methylates position 2 of adenine 2503 in 23S rRNA and position 2 of adenine 37 in tRNAs. The polypeptide is Probable dual-specificity RNA methyltransferase RlmN (Cutibacterium acnes (strain DSM 16379 / KPA171202) (Propionibacterium acnes)).